The primary structure comprises 1653 residues: Protein TOPAZ1 (1653 aa).

5 disordered regions span residues 1–88, 212–238, 553–591, 855–893, and 919–942; these read MPRA…PGID, GCMHVPENSSKSKKENPRSLIDKTDPS, KMKSEELSRSASEVVSNTTEDTSLTNMTHNLTGSKKKDR, PNVAEEHQSTDSKHMELPDKKEPSNALRELPVPDPGSMK, and EVTHETSSNEKPRGLSEQTKSSDL. Basic and acidic residues-rich tracts occupy residues 58–69 and 221–236; these read SGREEVESDKSA and SKSKKENPRSLIDKTD. Polar residues predominate over residues 561–585; that stretch reads RSASEVVSNTTEDTSLTNMTHNLTG. Basic and acidic residues-rich tracts occupy residues 858–877 and 920–942; these read AEEHQSTDSKHMELPDKKEP and VTHETSSNEKPRGLSEQTKSSDL.

It is found in the cytoplasm. Its subcellular location is the cytosol. Functionally, important for normal spermatogenesis and male fertility. Specifically required for progression to the post-meiotic stages of spermatocyte development. Seems to be necessary for normal expression levels of a number of testis-expressed gene transcripts, although its role in this process is unclear. This is Protein TOPAZ1 (TOPAZ1) from Bos taurus (Bovine).